A 383-amino-acid chain; its full sequence is Serine protease 23 (383 aa).

The first 23 residues, 1-23 (MAGIPGLLILLLVLLCVFMQVSP), serve as a signal peptide directing secretion. A glycan (N-linked (GlcNAc...) asparagine) is linked at asparagine 93. Cysteine 160 and cysteine 176 are joined by a disulfide. Histidine 175 functions as the Charge relay system in the catalytic mechanism. N-linked (GlcNAc...) asparagine glycosylation is present at asparagine 207. Catalysis depends on charge relay system residues aspartate 240 and serine 316.

Belongs to the peptidase S1 family.

It localises to the secreted. In Rattus norvegicus (Rat), this protein is Serine protease 23 (Prss23).